The following is a 175-amino-acid chain: Lipopolysaccharide export system protein LptH (175 aa).

The first 24 residues, 1-24 (MRFVNTLPLIFGLTAALGSSMALA), serve as a signal peptide directing secretion.

The protein belongs to the LptA family. As to quaternary structure, component of the lipopolysaccharide transport and assembly complex. Mainly exists as a dimer in solution. Tends to oligomerize already in solution. The protomers follow one another in a head-to-tail fashion throughout the crystal lattice, yielding a continuous fiber arrangement.

Its subcellular location is the periplasm. Its function is as follows. Involved in the assembly of lipopolysaccharide (LPS). Required for the translocation of LPS from the inner membrane to the outer membrane. May form a bridge between the inner membrane and the outer membrane, via interactions with LptC and LptD, thereby facilitating LPS transfer across the periplasm. Binds LPS. Important for cell envelope stability and essential for growth, cell viability and ability to cause infection in different animal models. The polypeptide is Lipopolysaccharide export system protein LptH (Pseudomonas aeruginosa (strain ATCC 15692 / DSM 22644 / CIP 104116 / JCM 14847 / LMG 12228 / 1C / PRS 101 / PAO1)).